Reading from the N-terminus, the 236-residue chain is Ubiquinone biosynthesis O-methyltransferase (236 aa).

S-adenosyl-L-methionine contacts are provided by Arg39, Gly59, Asp80, and Met124.

The protein belongs to the methyltransferase superfamily. UbiG/COQ3 family.

It catalyses the reaction a 3-demethylubiquinol + S-adenosyl-L-methionine = a ubiquinol + S-adenosyl-L-homocysteine + H(+). The catalysed reaction is a 3-(all-trans-polyprenyl)benzene-1,2-diol + S-adenosyl-L-methionine = a 2-methoxy-6-(all-trans-polyprenyl)phenol + S-adenosyl-L-homocysteine + H(+). It participates in cofactor biosynthesis; ubiquinone biosynthesis. Its function is as follows. O-methyltransferase that catalyzes the 2 O-methylation steps in the ubiquinone biosynthetic pathway. This chain is Ubiquinone biosynthesis O-methyltransferase, found in Shewanella sp. (strain MR-4).